The primary structure comprises 288 residues: 4-hydroxy-3-methylbut-2-enyl diphosphate reductase (288 aa).

[4Fe-4S] cluster is bound at residue Cys-12. (2E)-4-hydroxy-3-methylbut-2-enyl diphosphate contacts are provided by His-42 and His-77. The dimethylallyl diphosphate site is built by His-42 and His-77. Residues His-42 and His-77 each contribute to the isopentenyl diphosphate site. Cys-99 lines the [4Fe-4S] cluster pocket. His-127 contacts (2E)-4-hydroxy-3-methylbut-2-enyl diphosphate. His-127 provides a ligand contact to dimethylallyl diphosphate. Residue His-127 coordinates isopentenyl diphosphate. Glu-129 (proton donor) is an active-site residue. (2E)-4-hydroxy-3-methylbut-2-enyl diphosphate is bound at residue Thr-165. A [4Fe-4S] cluster-binding site is contributed by Cys-193. Residues Ser-221, Ser-222, Asn-223, and Ser-265 each contribute to the (2E)-4-hydroxy-3-methylbut-2-enyl diphosphate site. Residues Ser-221, Ser-222, Asn-223, and Ser-265 each coordinate dimethylallyl diphosphate. Isopentenyl diphosphate contacts are provided by Ser-221, Ser-222, Asn-223, and Ser-265.

It belongs to the IspH family. Requires [4Fe-4S] cluster as cofactor.

The catalysed reaction is isopentenyl diphosphate + 2 oxidized [2Fe-2S]-[ferredoxin] + H2O = (2E)-4-hydroxy-3-methylbut-2-enyl diphosphate + 2 reduced [2Fe-2S]-[ferredoxin] + 2 H(+). It carries out the reaction dimethylallyl diphosphate + 2 oxidized [2Fe-2S]-[ferredoxin] + H2O = (2E)-4-hydroxy-3-methylbut-2-enyl diphosphate + 2 reduced [2Fe-2S]-[ferredoxin] + 2 H(+). It functions in the pathway isoprenoid biosynthesis; dimethylallyl diphosphate biosynthesis; dimethylallyl diphosphate from (2E)-4-hydroxy-3-methylbutenyl diphosphate: step 1/1. Its pathway is isoprenoid biosynthesis; isopentenyl diphosphate biosynthesis via DXP pathway; isopentenyl diphosphate from 1-deoxy-D-xylulose 5-phosphate: step 6/6. In terms of biological role, catalyzes the conversion of 1-hydroxy-2-methyl-2-(E)-butenyl 4-diphosphate (HMBPP) into a mixture of isopentenyl diphosphate (IPP) and dimethylallyl diphosphate (DMAPP). Acts in the terminal step of the DOXP/MEP pathway for isoprenoid precursor biosynthesis. The polypeptide is 4-hydroxy-3-methylbut-2-enyl diphosphate reductase (Thermoanaerobacter pseudethanolicus (strain ATCC 33223 / 39E) (Clostridium thermohydrosulfuricum)).